We begin with the raw amino-acid sequence, 257 residues long: Imidazole glycerol phosphate synthase subunit HisF (257 aa).

Catalysis depends on residues aspartate 12 and aspartate 131.

This sequence belongs to the HisA/HisF family. As to quaternary structure, heterodimer of HisH and HisF.

It localises to the cytoplasm. It catalyses the reaction 5-[(5-phospho-1-deoxy-D-ribulos-1-ylimino)methylamino]-1-(5-phospho-beta-D-ribosyl)imidazole-4-carboxamide + L-glutamine = D-erythro-1-(imidazol-4-yl)glycerol 3-phosphate + 5-amino-1-(5-phospho-beta-D-ribosyl)imidazole-4-carboxamide + L-glutamate + H(+). The protein operates within amino-acid biosynthesis; L-histidine biosynthesis; L-histidine from 5-phospho-alpha-D-ribose 1-diphosphate: step 5/9. In terms of biological role, IGPS catalyzes the conversion of PRFAR and glutamine to IGP, AICAR and glutamate. The HisF subunit catalyzes the cyclization activity that produces IGP and AICAR from PRFAR using the ammonia provided by the HisH subunit. This Saccharophagus degradans (strain 2-40 / ATCC 43961 / DSM 17024) protein is Imidazole glycerol phosphate synthase subunit HisF.